The chain runs to 874 residues: Probable inorganic carbon transporter subunit DabA (874 aa).

The Zn(2+) site is built by cysteine 398, aspartate 400, histidine 580, and cysteine 595.

Belongs to the inorganic carbon transporter (TC 9.A.2) DabA family. Forms a complex with DabB. Requires Zn(2+) as cofactor.

The protein resides in the cell membrane. Its function is as follows. Part of an energy-coupled inorganic carbon pump. The chain is Probable inorganic carbon transporter subunit DabA from Bacillus cereus (strain AH187).